The primary structure comprises 350 residues: Protein RecA (350 aa).

65 to 72 (GPESSGKT) contributes to the ATP binding site. The tract at residues 329–350 (ASPDVKANPVKETEDDMADADI) is disordered. A compositionally biased stretch (acidic residues) spans 341 to 350 (TEDDMADADI).

Belongs to the RecA family.

The protein localises to the cytoplasm. Functionally, can catalyze the hydrolysis of ATP in the presence of single-stranded DNA, the ATP-dependent uptake of single-stranded DNA by duplex DNA, and the ATP-dependent hybridization of homologous single-stranded DNAs. It interacts with LexA causing its activation and leading to its autocatalytic cleavage. The chain is Protein RecA from Pseudomonas fluorescens (strain ATCC BAA-477 / NRRL B-23932 / Pf-5).